A 268-amino-acid polypeptide reads, in one-letter code: uncharacterized protein (268 aa).

This sequence belongs to the glycosyltransferase 2 family.

This is an uncharacterized protein from Bacillus subtilis (strain 168).